The chain runs to 1104 residues: MEELSGKPLSYAEKEKLKEKLAFLKKEYSRTLARLQRAKRAEKAKNSKKAIEDGVPQPEASSQLSHSESINKGFPCDTLQSNHLDEETGENISQILDVEPQSFNCKQGKEVLHTPRAGDIQGQLLHSTSSPDGKKEQNTLPGTTKTPWEKSSVSQEKEDYFDTNSLALLGKHRKGQESISRKNSRTPVSEKTHLLSLRSQIPDPPALVTGIGEGILIPPSGKSERGIDTLVRGNTVSAEAAVPSCTASNSNHSQHLEHTPPKSGCKITTQGPASSTNLVAQDQKMTIFTVNSVVYKAVRAHGQLPGSPNSCSVNDLTHSNLPANSTPNSKSLKSPSNTVDERNEPLQEDEILGPSKNFNLAAVSPPSTESQIHSCTMLEGLLFPAEYYVRTTRRMSDCQRKIALEAVIQSHLGVKKKELKKKTKATKAVVLSSEDTDQSESGMLDTSTGQSSSGSLSQKLLSPAEVSSPPGPAGKATTPPPGRGHRGKRKSARTSTLGHCQLLFPPCAALAVNRSKGKFTKHKCQNRGVVIHDFELPDEDFGLLKLEKLKSCSEKLIESPDSKNCGERLPREGNHAALEELQRDSETEGLEEELTVPPGEAYRPGPTLRRQPGSKDLSSSIVLFTPADTAAPNDSGRPPPSLCSPAFPILGMTPALGSQAAGETLSTEAAQPCSTSQPPLLGDTNSLVNNSKQCNSSACSPKPDTNLQASGRQGQPACDSDSGPQATPLPVESFTFRENQLCGNACLELHEHSTEQTETADRPACDNLNPGNLQLVSELKNPSSSCSVDVSAMWWERAGAKEPCIVTACEDVVSLWKPLNSLQWEKVHTWHFTEVPVLQIVPVPDVYNLICVALGSLEIREIRALLCSSGDDSEKQVLLKSGDIKAMLGLTKRRLVSSTGTFCNQQIQIMTFADDGSSKDEQLLMPPDETVLTFAEVQGTQEALLGTTTVNSIVIWNLKTGQLLKKMHIDDSYQASVCHGAYSEKGLLFVVVSQPCAKESQALGSPVFQLLVINPKTAQSVGVLLCSLPQGQAGRFLEGDVKDHVAAAVLTSGTIAIWDLLLGHCTALLPPVSDQSWSLVKWSGTDSHLLAGQKDGNIFIYRYF.

Positions 1-157 (MEELSGKPLS…WEKSSVSQEK (157 aa)) are required for its oligomerization and is important for its focal concentration at DNA damage sites. An interaction with RAD51 region spans residues 1-195 (MEELSGKPLS…TPVSEKTHLL (195 aa)). The interval 1–308 (MEELSGKPLS…RAHGQLPGSP (308 aa)) is interaction with BRCA1. The stretch at 9-48 (LSYAEKEKLKEKLAFLKKEYSRTLARLQRAKRAEKAKNSK) forms a coiled coil. The segment covering 39–52 (KRAEKAKNSKKAIE) has biased composition (basic and acidic residues). 3 disordered regions span residues 39 to 91 (KRAE…TGEN), 122 to 157 (GQLLHSTSSPDGKKEQNTLPGTTKTPWEKSSVSQEK), and 243 to 272 (PSCTASNSNHSQHLEHTPPKSGCKITTQGP). 2 stretches are compositionally biased toward polar residues: residues 59–70 (EASSQLSHSESI) and 138–154 (NTLPGTTKTPWEKSSVS). Position 274 is a phosphoserine (serine 274). The segment at 304–354 (LPGSPNSCSVNDLTHSNLPANSTPNSKSLKSPSNTVDERNEPLQEDEILGP) is disordered. Over residues 306-338 (GSPNSCSVNDLTHSNLPANSTPNSKSLKSPSNT) the composition is skewed to polar residues. Serine 364 is subject to Phosphoserine. Residues 374 to 424 (SCTMLEGLLFPAEYYVRTTRRMSDCQRKIALEAVIQSHLGVKKKELKKKTK) are chAM (Chromatin-association motif); required for chromatin association, mediates nucleosome association. Disordered regions lie at residues 417-494 (KELK…SART) and 581-730 (LQRD…TPLP). Serine 432 carries the post-translational modification Phosphoserine. Positions 446–462 (TSTGQSSSGSLSQKLLS) are enriched in low complexity. Positions 483-492 (RGHRGKRKSA) are enriched in basic residues. Positions 664–713 (TLSTEAAQPCSTSQPPLLGDTNSLVNNSKQCNSSACSPKPDTNLQASGRQ) are enriched in polar residues. The tract at residues 693–1104 (QCNSSACSPK…DGNIFIYRYF (412 aa)) is required for interaction with POLH and POLH DNA synthesis stimulation. An interaction with RAD51 and BRCA2 region spans residues 771–1104 (GNLQLVSELK…DGNIFIYRYF (334 aa)). The interaction with RAD51, BRCA2 and POLH stretch occupies residues 771–1104 (GNLQLVSELK…DGNIFIYRYF (334 aa)). WD repeat units follow at residues 772–833 (NLQL…WHFT), 835–879 (VPVL…QVLL), 880–927 (KSGD…LMPP), 928–970 (DETV…MHID), 976–1027 (SVCH…LLCS), 1033–1071 (AGRFLEGDVKDHVAAAVLTSGTIAIWDLLLGHCTALLPP), and 1073–1104 (SDQSWSLVKWSGTDSHLLAGQKDGNIFIYRYF).

As to quaternary structure, homooligomer; dissociated upon DNA damage thus allowing association with BRCA1. Oligomerization is essential for its focal accumulation at DNA breaks. Part of a BRCA complex containing BRCA1, BRCA2 and PALB2. Interacts with BRCA1 and this interaction is essential for its function in HRR. Interacts with RAD51AP1 and MORF4L1/MRG15. Component of the homologous recombination repair (HR) complex composed of ERCC5/XPG, BRCA2, PALB2, DSS1 and RAD51. Within the complex, interacts with ERCC5/XPG and BRCA2. Interacts with BRCA2, RAD51C, RAD51 and XRCC3; the interactions are direct and it may serve as a scaffold for a HR complex containing PALB2, BRCA2, RAD51C, RAD51 and XRCC3. Interacts with POLH; the interaction is direct.

The protein resides in the nucleus. Plays a critical role in homologous recombination repair (HRR) through its ability to recruit BRCA2 and RAD51 to DNA breaks. Strongly stimulates the DNA strand-invasion activity of RAD51, stabilizes the nucleoprotein filament against a disruptive BRC3-BRC4 polypeptide and helps RAD51 to overcome the suppressive effect of replication protein A (RPA). Functionally cooperates with RAD51AP1 in promoting of D-loop formation by RAD51. Serves as the molecular scaffold in the formation of the BRCA1-PALB2-BRCA2 complex which is essential for homologous recombination. Via its WD repeats is proposed to scaffold a HR complex containing RAD51C and BRCA2 which is thought to play a role in HR-mediated DNA repair. Essential partner of BRCA2 that promotes the localization and stability of BRCA2. Also enables its recombinational repair and checkpoint functions of BRCA2. May act by promoting stable association of BRCA2 with nuclear structures, allowing BRCA2 to escape the effects of proteasome-mediated degradation. Binds DNA with high affinity for D loop, which comprises single-stranded, double-stranded and branched DNA structures. May play a role in the extension step after strand invasion at replication-dependent DNA double-strand breaks; together with BRCA2 is involved in both POLH localization at collapsed replication forks and DNA polymerization activity. In Mus musculus (Mouse), this protein is Partner and localizer of BRCA2 (Palb2).